A 199-amino-acid polypeptide reads, in one-letter code: Chaperone protein TorD (199 aa).

The protein belongs to the TorD/DmsD family. TorD subfamily.

It localises to the cytoplasm. Its function is as follows. Involved in the biogenesis of TorA. Acts on TorA before the insertion of the molybdenum cofactor and, as a result, probably favors a conformation of the apoenzyme that is competent for acquiring the cofactor. This chain is Chaperone protein TorD, found in Escherichia coli O6:H1 (strain CFT073 / ATCC 700928 / UPEC).